We begin with the raw amino-acid sequence, 493 residues long: Leucine-rich repeat-containing protein 14 (493 aa).

The LRR 1; degenerate repeat unit spans residues 111–146 (KHALRVLDMTGLLDDGVEQDPGTMSMWDCTAAVART). The stretch at 194–218 (RLCCRDLRAEDLPMRNTVALLQLLD) is one LRR 2; degenerate repeat. An LRR 3; degenerate repeat occupies 219-246 (AGCLRRVDLRFNNLGLRGLSVIIPHVAR). The stretch at 247-282 (FQHLASLRLHYVHGDSRQPSVDGEDNFRYFLAQMGR) is one LRR 4; degenerate repeat. 5 LRR repeats span residues 283–307 (FTCL…LSTL), 308–339 (QSPL…AHLK), 340–360 (KLDL…QGLL), 364–391 (AATL…ILTQ), and 392–416 (CASL…LLRD).

This sequence belongs to the PRAME family. LRRC14 subfamily. Interacts with IKBKB; disrupts IKBKB-IKBKG interaction preventing I-kappa-B-kinase (IKK) core complex formation and leading to a decrease of IKBKB phosphorylation and NF-kappaB activation. Interacts with CHUK.

Its subcellular location is the cytoplasm. Functionally, negatively regulates Toll-like receptor-mediated NF-kappa-B signaling by disrupting IKK core complex formation through interaction with IKBKB. This is Leucine-rich repeat-containing protein 14 from Homo sapiens (Human).